Reading from the N-terminus, the 685-residue chain is Polyphosphate kinase (685 aa).

Residue Asn45 coordinates ATP. 2 residues coordinate Mg(2+): Arg375 and Arg405. The Phosphohistidine intermediate role is filled by His435. ATP-binding residues include Tyr468, Arg564, and His592.

The protein belongs to the polyphosphate kinase 1 (PPK1) family. Requires Mg(2+) as cofactor. Post-translationally, an intermediate of this reaction is the autophosphorylated ppk in which a phosphate is covalently linked to a histidine residue through a N-P bond.

The catalysed reaction is [phosphate](n) + ATP = [phosphate](n+1) + ADP. Its function is as follows. Catalyzes the reversible transfer of the terminal phosphate of ATP to form a long-chain polyphosphate (polyP). In Neisseria gonorrhoeae (strain ATCC 700825 / FA 1090), this protein is Polyphosphate kinase.